A 326-amino-acid polypeptide reads, in one-letter code: Eukaryotic translation initiation factor 2 subunit 1 (326 aa).

An S1 motif domain is found at 24–95 (DDLIMVKVNR…QKGYIDLSKR (72 aa)). The residue at position 59 (S59) is a Phosphoserine; by eIK1, eIK2 and PK4. The tract at residues 291-326 (LDKHDGLSSDDEYSSDGDEDDSSNDDDNSSDEDDDD) is disordered. The span at 298-326 (SSDDEYSSDGDEDDSSNDDDNSSDEDDDD) shows a compositional bias: acidic residues.

This sequence belongs to the eIF-2-alpha family. Post-translationally, phosphorylates at Ser-59 in mature trophozoites, schizonts and gametocytes but not in rings and young trophozoites. Phosphorylates at Ser-59 by eIK2 in salivary gland sporozoites but not in midgut and hemocoel sporozoites. Dephosphorylated at Ser-59 by UIS2. Phosphorylation of eIF2alpha subunit of the pre-initiation complex eIF2 inhibits recycling of inactive eIF2-GDP to active eIF2-GTP by limiting the activity of the guanine nucleotide exchange factor eIF2B and thus, inhibits protein translation.

It localises to the cytoplasm. The protein localises to the stress granule. Functionally, functions in the early steps of protein synthesis by forming a ternary complex with GTP and initiator tRNA. May regulate protein translation in response to amino acid starvation. May regulate protein at various stages of parasite development. This chain is Eukaryotic translation initiation factor 2 subunit 1, found in Plasmodium berghei (strain Anka).